A 485-amino-acid chain; its full sequence is Inosine-5'-monophosphate dehydrogenase (485 aa).

2 CBS domains span residues 99–154 and 156–215; these read IVED…LVKE and MTKD…VRDE. NAD(+) is bound by residues aspartate 247 and 294–296; that span reads GIG. K(+) contacts are provided by glycine 296 and glycine 298. Position 299 (serine 299) interacts with IMP. K(+) is bound at residue cysteine 301. Cysteine 301 serves as the catalytic Thioimidate intermediate. IMP contacts are provided by residues 334 to 336, 357 to 358, and 381 to 385; these read DGG, GN, and YRGMG. Arginine 397 (proton acceptor) is an active-site residue. Glutamate 412 is an IMP binding site. The K(+) site is built by glutamate 466, serine 467, and histidine 468.

It belongs to the IMPDH/GMPR family. As to quaternary structure, homotetramer. K(+) serves as cofactor.

The enzyme catalyses IMP + NAD(+) + H2O = XMP + NADH + H(+). Its pathway is purine metabolism; XMP biosynthesis via de novo pathway; XMP from IMP: step 1/1. Its activity is regulated as follows. Mycophenolic acid (MPA) is a non-competitive inhibitor that prevents formation of the closed enzyme conformation by binding to the same site as the amobile flap. In contrast, mizoribine monophosphate (MZP) is a competitive inhibitor that induces the closed conformation. MPA is a potent inhibitor of mammalian IMPDHs but a poor inhibitor of the bacterial enzymes. MZP is a more potent inhibitor of bacterial IMPDH. In terms of biological role, catalyzes the conversion of inosine 5'-phosphate (IMP) to xanthosine 5'-phosphate (XMP), the first committed and rate-limiting step in the de novo synthesis of guanine nucleotides, and therefore plays an important role in the regulation of cell growth. The polypeptide is Inosine-5'-monophosphate dehydrogenase (Pyrococcus abyssi (strain GE5 / Orsay)).